The primary structure comprises 1537 residues: DNA excision repair protein ERCC-6-like 2 (1537 aa).

Residues 134–319 (YRHYIEGRGC…WCVMDWAVPG (186 aa)) enclose the Helicase ATP-binding domain. 147 to 154 (DDMGLGKT) contributes to the ATP binding site. Residues 270 to 273 (DEAH) carry the DEAH box motif. The Helicase C-terminal domain maps to 510 to 660 (VLQQLLNHFR…CVVVGSENAK (151 aa)). 2 disordered regions span residues 715–735 (KGEPSAQELETPRDPDCQEPT) and 749–768 (SVGHSLGKTDKHKFSDTSRT). The segment covering 755 to 764 (GKTDKHKFSD) has biased composition (basic and acidic residues). Residues 772 to 783 (PAQLTLLQCGFS) carry the Atypical PIP-box motif. 3 disordered regions span residues 791–811 (KSDQDGDGNPVPSDGSSDEQP), 833–891 (SEHQ…EDSD), and 918–948 (EDSEAENPVKVNHGDDRQNSGRGNGPVPNLL). The segment covering 834 to 857 (EHQKSDNIQTPDEKCVSDKSEKTL) has biased composition (basic and acidic residues). Phosphoserine is present on residues serine 968 and serine 971. A disordered region spans residues 1274–1306 (VHKKEERVRNKSKEKESLLKENPSNDSTLSCYD). A compositionally biased stretch (basic and acidic residues) spans 1276–1292 (KKEERVRNKSKEKESLL). Residues 1295–1306 (NPSNDSTLSCYD) are compositionally biased toward polar residues.

It belongs to the SNF2/RAD54 helicase family. In terms of assembly, interacts with NEK6. Interacts (via an atypical PIP-box) with PCNA; this interaction facilitates cenrtomeric localization of ERCC6L2. Interacts with CYREN; this interaction is DNA independent. Interacts with XRCC6 and XRCC5. Phosphorylated by NEK6.

Its subcellular location is the nucleus. The protein resides in the cytoplasm. The protein localises to the cytoskeleton. It localises to the microtubule organizing center. It is found in the centrosome. Its subcellular location is the mitochondrion. The protein resides in the chromosome. The protein localises to the centromere. In terms of biological role, promotes double-strand break (DSB) end-joining and facilitates programmed recombination by controlling how DNA ends are joined in a spatially oriented manner during repair. Also plays a role in DNA repair by restricting DNA end resection in double strand break (DSB) repair. Facilitates replication of complex DNA regions and regulates the maintenance of chromatin structure. This chain is DNA excision repair protein ERCC-6-like 2, found in Mus musculus (Mouse).